The following is a 341-amino-acid chain: Ribosomal RNA small subunit methyltransferase H (341 aa).

Residues 47–49, D64, F91, D109, and Q116 contribute to the S-adenosyl-L-methionine site; that span reads GGY. The tract at residues 292 to 319 is disordered; the sequence is VAASEEEASRNPRARSAKLRAGVRTEAP.

This sequence belongs to the methyltransferase superfamily. RsmH family.

The protein resides in the cytoplasm. It carries out the reaction cytidine(1402) in 16S rRNA + S-adenosyl-L-methionine = N(4)-methylcytidine(1402) in 16S rRNA + S-adenosyl-L-homocysteine + H(+). In terms of biological role, specifically methylates the N4 position of cytidine in position 1402 (C1402) of 16S rRNA. The protein is Ribosomal RNA small subunit methyltransferase H of Rhizobium meliloti (strain 1021) (Ensifer meliloti).